The primary structure comprises 201 residues: uncharacterized protein (201 aa).

Disordered regions lie at residues 46–80 (PLVN…SYDE) and 143–201 (SSTS…ANPA). 2 stretches are compositionally biased toward polar residues: residues 64–78 (GSQN…SQSY) and 143–167 (SSTS…NSPA).

This is an uncharacterized protein from Legionella pneumophila.